A 328-amino-acid polypeptide reads, in one-letter code: Phosphate acyltransferase (328 aa).

It belongs to the PlsX family. Homodimer. Probably interacts with PlsY.

Its subcellular location is the cytoplasm. It catalyses the reaction a fatty acyl-[ACP] + phosphate = an acyl phosphate + holo-[ACP]. The protein operates within lipid metabolism; phospholipid metabolism. In terms of biological role, catalyzes the reversible formation of acyl-phosphate (acyl-PO(4)) from acyl-[acyl-carrier-protein] (acyl-ACP). This enzyme utilizes acyl-ACP as fatty acyl donor, but not acyl-CoA. This is Phosphate acyltransferase from Campylobacter jejuni subsp. doylei (strain ATCC BAA-1458 / RM4099 / 269.97).